Here is a 97-residue protein sequence, read N- to C-terminus: Eotaxin (97 aa).

The N-terminal stretch at 1-23 is a signal peptide; sequence MQLSTALLFLLLTATSFTSQVLA. Cystine bridges form between cysteine 32–cysteine 57 and cysteine 33–cysteine 73. Residue threonine 94 is glycosylated (O-linked (GalNAc...) threonine).

Belongs to the intercrine beta (chemokine CC) family.

Its subcellular location is the secreted. In terms of biological role, in response to the presence of allergens, this protein directly promotes the accumulation of eosinophils (a prominent feature of allergic inflammatory reactions), but not lymphocytes, macrophages or neutrophils. Binds to CCR3. The chain is Eotaxin (Ccl11) from Rattus norvegicus (Rat).